The following is a 267-amino-acid chain: 3-methyl-2-oxobutanoate hydroxymethyltransferase (267 aa).

Mg(2+)-binding residues include Asp-46 and Asp-85. Residues 46 to 47 (DS), Asp-85, and Lys-115 contribute to the 3-methyl-2-oxobutanoate site. Glu-117 lines the Mg(2+) pocket. Residue Glu-184 is the Proton acceptor of the active site.

The protein belongs to the PanB family. Homodecamer; pentamer of dimers. It depends on Mg(2+) as a cofactor.

It is found in the cytoplasm. It carries out the reaction 3-methyl-2-oxobutanoate + (6R)-5,10-methylene-5,6,7,8-tetrahydrofolate + H2O = 2-dehydropantoate + (6S)-5,6,7,8-tetrahydrofolate. Its pathway is cofactor biosynthesis; (R)-pantothenate biosynthesis; (R)-pantoate from 3-methyl-2-oxobutanoate: step 1/2. Its function is as follows. Catalyzes the reversible reaction in which hydroxymethyl group from 5,10-methylenetetrahydrofolate is transferred onto alpha-ketoisovalerate to form ketopantoate. This is 3-methyl-2-oxobutanoate hydroxymethyltransferase from Geobacter metallireducens (strain ATCC 53774 / DSM 7210 / GS-15).